Reading from the N-terminus, the 291-residue chain is Exosome complex component RRP42 (291 aa).

Position 2 is an N-acetylalanine (Ala-2). The residue at position 116 (Lys-116) is an N6-acetyllysine. Residue Ser-177 is modified to Phosphoserine.

The protein belongs to the RNase PH family. In terms of assembly, component of the RNA exosome core complex (Exo-9), composed of EXOSC1, EXOSC2, EXOSC3, EXOSC4, EXOSC5, EXOSC6, EXOSC7, EXOSC8 and EXOSC9; within the complex interacts with EXOSC2 and EXOSC4. The catalytically inactive RNA exosome core complex (Exo-9) associates with the catalytic subunit EXOSC10/RRP6. Exo-9 may associate with DIS3 to form the nucleolar exosome complex, or DIS3L to form the cytoplasmic exosome complex. Exo-9 is formed by a hexameric base ring consisting of the heterodimers EXOSC4-EXOSC9, EXOSC5-EXOSC8 and EXOSC6-EXOSC7, and a cap ring consisting of EXOSC1, EXOSC2 and EXOSC3. The RNA exosome complex associates with cofactors C1D/RRP47, MPHOSPH6/MPP6 and MTREX/MTR4. Interacts with ZC3HAV1. Interacts with DIS3; the interaction is direct.

The protein localises to the nucleus. It localises to the nucleolus. It is found in the cytoplasm. Non-catalytic component of the RNA exosome complex which has 3'-&gt;5' exoribonuclease activity and participates in a multitude of cellular RNA processing and degradation events. In the nucleus, the RNA exosome complex is involved in proper maturation of stable RNA species such as rRNA, snRNA and snoRNA, in the elimination of RNA processing by-products and non-coding 'pervasive' transcripts, such as antisense RNA species and promoter-upstream transcripts (PROMPTs), and of mRNAs with processing defects, thereby limiting or excluding their export to the cytoplasm. The RNA exosome may be involved in Ig class switch recombination (CSR) and/or Ig variable region somatic hypermutation (SHM) by targeting AICDA deamination activity to transcribed dsDNA substrates. In the cytoplasm, the RNA exosome complex is involved in general mRNA turnover and specifically degrades inherently unstable mRNAs containing AU-rich elements (AREs) within their 3' untranslated regions, and in RNA surveillance pathways, preventing translation of aberrant mRNAs. It seems to be involved in degradation of histone mRNA. The catalytic inactive RNA exosome core complex of 9 subunits (Exo-9) is proposed to play a pivotal role in the binding and presentation of RNA for ribonucleolysis, and to serve as a scaffold for the association with catalytic subunits and accessory proteins or complexes. The chain is Exosome complex component RRP42 (EXOSC7) from Homo sapiens (Human).